Here is a 482-residue protein sequence, read N- to C-terminus: E1B 55 kDa protein (482 aa).

Positions 73 to 94 (VLDSGEGPSCADDRDKQEKKES) are disordered. Residues 83 to 94 (ADDRDKQEKKES) show a composition bias toward basic and acidic residues. 2 positions are modified to phosphoserine: serine 476 and serine 477.

Belongs to the adenoviridae E1B 55 kDa protein family. In terms of assembly, interacts with host PML-4 and PML-5; this interaction promotes efficient subnuclear targeting of E1B-55K to PML nuclear bodies. Interacts with E4-ORF3 protein. Interacts with E4-ORF6 protein.

The protein localises to the host nucleus. It localises to the host cytoplasm. Its function is as follows. Plays a major role to prevent cellular inhibition of viral genome replication. Assembles an SCF-like E3 ubiquitin ligase complex based on the cellular proteins ELOB, ELOC, CUL5 and RBX1, in cooperation with viral E4orf6. This viral RING-type ligase ubiquitinates cellular substrates and targets them to proteasomal degradation: TP53/p53, LIG4, MRE11-RAD50-NBS1 (MRN) complex, ITGA3, DAXX and BLM. E1B-55K probably acts as the substrate-specific adapter of the SCF-like E3 ubiquitin ligase complex. Degradation of host TP53/p53 activity is essential for preventing E1A-induced TP53 accumulation that would otherwise lead to cell apoptosis and growth arrest. E1B-55K also inactivates TP53 transcription-factor activity by binding its transactivation domain. E1B-55K also functions as a SUMO1 E3 ligase for TP53 which causes the latter to be sequestered in promyelocytic leukemia (PML) nuclear bodies thereby contributing to maximal inhibition of TP53 function. The chain is E1B 55 kDa protein from Homo sapiens (Human).